The sequence spans 88 residues: Small ribosomal subunit protein bS20 (88 aa).

The disordered stretch occupies residues 1–25 (MANSPQAKKRARQNERRAEVNKARR). The segment covering 12–22 (RQNERRAEVNK) has biased composition (basic and acidic residues).

It belongs to the bacterial ribosomal protein bS20 family.

Its function is as follows. Binds directly to 16S ribosomal RNA. In Dinoroseobacter shibae (strain DSM 16493 / NCIMB 14021 / DFL 12), this protein is Small ribosomal subunit protein bS20.